The sequence spans 213 residues: Large ribosomal subunit protein uL1 (213 aa).

Belongs to the universal ribosomal protein uL1 family. In terms of assembly, part of the 50S ribosomal subunit.

In terms of biological role, binds directly to 23S rRNA. Probably involved in E site tRNA release. Protein L1 is also a translational repressor protein, it controls the translation of its operon by binding to its mRNA. The sequence is that of Large ribosomal subunit protein uL1 from Picrophilus torridus (strain ATCC 700027 / DSM 9790 / JCM 10055 / NBRC 100828 / KAW 2/3).